Here is a 468-residue protein sequence, read N- to C-terminus: Uronate isomerase (468 aa).

The protein belongs to the metallo-dependent hydrolases superfamily. Uronate isomerase family.

It catalyses the reaction D-glucuronate = D-fructuronate. It carries out the reaction aldehydo-D-galacturonate = keto-D-tagaturonate. It functions in the pathway carbohydrate metabolism; pentose and glucuronate interconversion. The protein is Uronate isomerase of Lachnospira eligens (strain ATCC 27750 / DSM 3376 / VPI C15-48 / C15-B4) (Eubacterium eligens).